Here is a 314-residue protein sequence, read N- to C-terminus: Trihelix transcription factor ASR3 (314 aa).

The tract at residues 1–34 is disordered; that stretch reads MALEQLGLGVSAVDGGENSSAPSNDGGDDGVKTA. The region spanning 38–104 is the Myb-like domain; that stretch reads RWTRQEILVL…QCRKRWSNLA (67 aa). Residues 84–91 carry the Nuclear localization signal motif; that stretch reads CKRHGVNR. Positions 161 to 165 match the EAR 1 motif; the sequence is LSLGL. Position 189 is a phosphothreonine; by MAPK4 (T189). The interval 207–255 is disordered; it reads CVADQGRVKEKQPEAANVEGGSTSQEERKRKRTSFGEKEEEEEEGETKK. The EAR 2 signature appears at 280 to 284; it reads LNLKL.

Homodimer. Interacts directly with MPK4. Post-translationally, phosphorylated on Thr-189 by MPK4 in response to microbe-associated molecular patterns (MAMPs, e.g. flg22, elf18, chitin, and LPS). This phosphorylation enhances DNA-binding and thus negatively regulates immune gene expression.

It localises to the nucleus. In terms of biological role, transcriptional repressor that binds DNA and plays a negative role in regulating microbe-associated molecular patterns-(MAMPs, e.g. flg22, elf18, chitin, and LPS) triggered immunity (PTI) by negatively regulating immune gene expression. The chain is Trihelix transcription factor ASR3 from Arabidopsis thaliana (Mouse-ear cress).